We begin with the raw amino-acid sequence, 295 residues long: Pyridoxal 5'-phosphate synthase subunit PdxS (295 aa).

Aspartate 25 contributes to the D-ribose 5-phosphate binding site. Lysine 82 (schiff-base intermediate with D-ribose 5-phosphate) is an active-site residue. Residue glycine 154 participates in D-ribose 5-phosphate binding. Position 166 (arginine 166) interacts with D-glyceraldehyde 3-phosphate. D-ribose 5-phosphate contacts are provided by residues glycine 215 and 236 to 237; that span reads GS.

Belongs to the PdxS/SNZ family. As to quaternary structure, in the presence of PdxT, forms a dodecamer of heterodimers.

It catalyses the reaction aldehydo-D-ribose 5-phosphate + D-glyceraldehyde 3-phosphate + L-glutamine = pyridoxal 5'-phosphate + L-glutamate + phosphate + 3 H2O + H(+). Its pathway is cofactor biosynthesis; pyridoxal 5'-phosphate biosynthesis. Catalyzes the formation of pyridoxal 5'-phosphate from ribose 5-phosphate (RBP), glyceraldehyde 3-phosphate (G3P) and ammonia. The ammonia is provided by the PdxT subunit. Can also use ribulose 5-phosphate and dihydroxyacetone phosphate as substrates, resulting from enzyme-catalyzed isomerization of RBP and G3P, respectively. This chain is Pyridoxal 5'-phosphate synthase subunit PdxS, found in Bacillus cereus (strain Q1).